The primary structure comprises 611 residues: O-fucosyltransferase 8 (611 aa).

A disordered region spans residues 1-29 (MGKQGSPRSPRPETIDKEEKFGRRSLDSL). Positions 10-26 (PRPETIDKEEKFGRRSL) are enriched in basic and acidic residues. A helical; Signal-anchor for type II membrane protein transmembrane segment spans residues 78-98 (IVLMISVTGFIFCMDSIMVSI). 3 N-linked (GlcNAc...) asparagine glycosylation sites follow: asparagine 115, asparagine 216, and asparagine 270. 386–388 (HLR) is a substrate binding site. The N-linked (GlcNAc...) asparagine glycan is linked to asparagine 506.

This sequence belongs to the glycosyltransferase GT106 family.

Its subcellular location is the membrane. It participates in glycan metabolism. The protein is O-fucosyltransferase 8 of Arabidopsis thaliana (Mouse-ear cress).